The primary structure comprises 598 residues: NADH-quinone oxidoreductase subunit C/D (598 aa).

The interval Met-1–Glu-189 is NADH dehydrogenase I subunit C. The interval Asp-213–Arg-598 is NADH dehydrogenase I subunit D.

The protein in the N-terminal section; belongs to the complex I 30 kDa subunit family. It in the C-terminal section; belongs to the complex I 49 kDa subunit family. As to quaternary structure, NDH-1 is composed of 13 different subunits. Subunits NuoB, CD, E, F, and G constitute the peripheral sector of the complex.

The protein localises to the cell inner membrane. The catalysed reaction is a quinone + NADH + 5 H(+)(in) = a quinol + NAD(+) + 4 H(+)(out). In terms of biological role, NDH-1 shuttles electrons from NADH, via FMN and iron-sulfur (Fe-S) centers, to quinones in the respiratory chain. The immediate electron acceptor for the enzyme in this species is believed to be ubiquinone. Couples the redox reaction to proton translocation (for every two electrons transferred, four hydrogen ions are translocated across the cytoplasmic membrane), and thus conserves the redox energy in a proton gradient. This chain is NADH-quinone oxidoreductase subunit C/D, found in Yersinia enterocolitica serotype O:8 / biotype 1B (strain NCTC 13174 / 8081).